Reading from the N-terminus, the 1003-residue chain is cGMP-dependent protein kinase (1003 aa).

Residues 1–141 form a disordered region; sequence MGACSSKAQH…KAIKQQEDTQ (141 aa). G2 carries N-myristoyl glycine lipidation. A lipid anchor (S-palmitoyl cysteine) is attached at C4. Residues 69-85 are compositionally biased toward low complexity; it reads EQQQQQQQQQQQQQEQQ. 2 stretches are compositionally biased toward basic and acidic residues: residues 86–109 and 127–141; these read QHPE…ERKP and ERKV…EDTQ. CNMP-binding domain regions lie at residues 173-289, 292-391, 411-548, and 570-669; these read VCSS…FLAS, FFEM…RVLG, VFAS…ATLG, and IFRY…LQIV. Residues G237, E238, R247, and T248 each coordinate 3',5'-cyclic GMP. R625, G634, E635, A637, R644, and S645 together coordinate 3',5'-cyclic GMP. Residues 693–950 form the Protein kinase domain; it reads LNVVRVVGRG…YKDIKEHAFF (258 aa). ATP contacts are provided by residues 699–707 and K722; that span reads VGRGTFGTV. D816 serves as the catalytic Proton acceptor. The 53-residue stretch at 951–1003 folds into the AGC-kinase C-terminal domain; that stretch reads SDFDWDRLAGRDLSPPLLPKGEIYAEDAEEGGLDIEEDEGIELEDEYEWDKDF.

The protein belongs to the protein kinase superfamily. AGC Ser/Thr protein kinase family. cGMP subfamily. As to quaternary structure, monomer. The cofactor is Mg(2+).

Its subcellular location is the cell membrane. The protein localises to the cytoplasm. It carries out the reaction L-seryl-[protein] + ATP = O-phospho-L-seryl-[protein] + ADP + H(+). The catalysed reaction is L-threonyl-[protein] + ATP = O-phospho-L-threonyl-[protein] + ADP + H(+). With respect to regulation, activated by cGMP. The cGMP-binding domains acts cooperatively to activate PKG. Inhibited by the antiparasitic small molecule 4-[2-(4-fluorophenyl)-5-(1-methylpiperidine-4-yl)-1Hpyrrol- 3-yl]pyridine (compound 1). Serine/threonine protein kinase which acts as a downstream effector of the second messenger cGMP. In Eimeria tenella (Coccidian parasite), this protein is cGMP-dependent protein kinase.